The primary structure comprises 235 residues: Ribonuclease 3 (235 aa).

An RNase III domain is found at 7 to 131; sequence LSALEARIGH…IIGAVFLDGG (125 aa). Glutamate 45 contributes to the Mg(2+) binding site. The active site involves aspartate 49. Mg(2+) is bound by residues aspartate 117 and glutamate 120. Residue glutamate 120 is part of the active site. Residues 156–225 enclose the DRBM domain; that stretch reads DPKTTLQEWA…AAAFLTREKI (70 aa).

The protein belongs to the ribonuclease III family. As to quaternary structure, homodimer. It depends on Mg(2+) as a cofactor.

Its subcellular location is the cytoplasm. The catalysed reaction is Endonucleolytic cleavage to 5'-phosphomonoester.. In terms of biological role, digests double-stranded RNA. Involved in the processing of primary rRNA transcript to yield the immediate precursors to the large and small rRNAs (23S and 16S). Processes some mRNAs, and tRNAs when they are encoded in the rRNA operon. Processes pre-crRNA and tracrRNA of type II CRISPR loci if present in the organism. The protein is Ribonuclease 3 of Methylocella silvestris (strain DSM 15510 / CIP 108128 / LMG 27833 / NCIMB 13906 / BL2).